The sequence spans 322 residues: MAIGDRKKIIIDTDPGIDDAMAIFVALNSPEVDVIGLTTIFGNVYTTLATRNALHLLEVAGRTDIPVAEGTHKTFLNDTKLRIADFVHGKDGLGNQNFPPPKGKPIEKSGPEFLVEQAKLCPGEITVVALGPLTNLALAVQLDPEFSKNVGQIVLLGGAFAVNGNVNPASEANIFGDPEAADIVFTCGADIIAVGINVTHQVIMTADDKDKLASSKGKLAQYLCKILDVYYDYHLTAYEIKGVYLHDPATILAAFLPSLFTYTEGVARVQTSGITRGLTLLYNNLKRFEEANEWSDKPTVKVAVTVDAPAVVKLIMDRLMES.

Residues D14 and H246 contribute to the active site.

The protein belongs to the IUNH family. In terms of assembly, component of the NSH heterocomplex made of URH1/NSH1 and URH2/NSH2 which exhibits strong xanthosine nucleosidase activity. Interacts with URH1. As to expression, expressed in roots, seedlings and flowers.

The protein resides in the cytoplasm. Its subcellular location is the cytosol. It carries out the reaction uridine + H2O = D-ribose + uracil. It catalyses the reaction inosine + H2O = hypoxanthine + D-ribose. The enzyme catalyses xanthosine + H2O = D-ribose + xanthine. In terms of biological role, involved in pyrimidine breakdown, especially in response to dark stress. In the presence of URH1, exhibits efficient inosine and xanthosine hydrolytic activities. Support inosine breakdown especially during the late phase of senescence. The chain is Probable uridine nucleosidase 2 from Arabidopsis thaliana (Mouse-ear cress).